The following is a 445-amino-acid chain: D-serine dehydratase (445 aa).

An N6-(pyridoxal phosphate)lysine modification is found at K118.

The protein belongs to the serine/threonine dehydratase family. DsdA subfamily. Monomer. The cofactor is pyridoxal 5'-phosphate.

The catalysed reaction is D-serine = pyruvate + NH4(+). In Serratia proteamaculans (strain 568), this protein is D-serine dehydratase.